Consider the following 240-residue polypeptide: Hairy and enhancer of split-related protein HELT (240 aa).

The region spanning 10-65 (RTPVSHKVIEKRRRDRINRCLNELGKTVPMALAKQSSGKLEKAEILEMTVQYLRAL) is the bHLH domain. Position 48 is an N6-acetyllysine (Lys-48). The Orange domain maps to 86 to 121 (FHYGYHECMKNLVHYLTTVERMETKDTKYARILAFL).

The protein belongs to the HEY family. As to quaternary structure, self-associates. Interacts with HES5 and HEY2. In terms of tissue distribution, expressed in heart and testis.

It is found in the nucleus. Its function is as follows. Transcriptional repressor which binds preferentially to the canonical E box sequence 5'-CACGCG-3'. Required for the development of GABAergic neurons. The sequence is that of Hairy and enhancer of split-related protein HELT (Helt) from Mus musculus (Mouse).